The primary structure comprises 66 residues: Toxin Boma6e (66 aa).

Residues 2-64 (RDAYIAQNYN…VPLKVQGKCH (63 aa)) form the LCN-type CS-alpha/beta domain. 3 cysteine pairs are disulfide-bonded: cysteine 12–cysteine 63, cysteine 22–cysteine 46, and cysteine 26–cysteine 48.

The protein belongs to the long (3 C-C) scorpion toxin superfamily. Post-translationally, only three disulfide bridges can be formed, because only seven cysteines are present. Expressed by the venom gland.

The protein resides in the secreted. Binds voltage-independently at site-3 of sodium channels (Nav) and inhibits the inactivation of the activated channels, thereby blocking neuronal transmission. The chain is Toxin Boma6e from Buthus occitanus mardochei (Moroccan scorpion).